The chain runs to 329 residues: Zygote arrest protein 1 (329 aa).

Disordered stretches follow at residues 106–132 (LRRR…RTQA) and 146–218 (FREE…DDLK). A compositionally biased stretch (acidic residues) spans 149-162 (EGEEEEDTDLEVTE). Residues 166-177 (SAEKLESAEKNV) show a composition bias toward basic and acidic residues. The 3CxxC-type zinc-finger motif lies at 231-314 (KYGFYHCKDC…RQDLCGRCKG (84 aa)).

This sequence belongs to the ZAR1 family. In terms of tissue distribution, specifically expressed in ovaries but absent in testes.

It localises to the cytoplasm. It is found in the cytoplasmic ribonucleoprotein granule. MRNA-binding protein required for maternal mRNA storage, translation and degradation during oocyte maturation. Probably promotes formation of some phase-separated membraneless compartment that stores maternal mRNAs in oocytes: acts by undergoing liquid-liquid phase separation upon binding to maternal mRNAs. Binds to the 3'-UTR of zona pellucida mRNAs, inhibiting their translation. This Danio rerio (Zebrafish) protein is Zygote arrest protein 1.